Here is a 175-residue protein sequence, read N- to C-terminus: Putative lipoprotein LppN (175 aa).

The N-terminal stretch at 1-20 (MRLPGRHVLYALSAVTMLAA) is a signal peptide. The N-palmitoyl cysteine moiety is linked to residue Cys-21. Cys-21 is lipidated: S-diacylglycerol cysteine. Residues 31 to 56 (ASTNMNPTNPPATAETATVSPTPAPQ) are disordered. The span at 33–48 (TNMNPTNPPATAETAT) shows a compositional bias: low complexity.

Its subcellular location is the cell membrane. The sequence is that of Putative lipoprotein LppN (lppN) from Mycobacterium bovis (strain ATCC BAA-935 / AF2122/97).